The following is a 187-amino-acid chain: UPF0301 protein VSAL_I0547 (187 aa).

The protein belongs to the UPF0301 (AlgH) family.

This chain is UPF0301 protein VSAL_I0547, found in Aliivibrio salmonicida (strain LFI1238) (Vibrio salmonicida (strain LFI1238)).